Here is a 186-residue protein sequence, read N- to C-terminus: Superoxide dismutase [Cu-Zn] (186 aa).

A signal peptide spans 1-20 (MKKTVLALMFSCGMVASAFA). 3 residues coordinate Cu cation: His79, His81, and His104. Cysteines 86 and 182 form a disulfide. Zn(2+) contacts are provided by His104, His113, His122, and Asp125. His160 is a Cu cation binding site.

It belongs to the Cu-Zn superoxide dismutase family. Homodimer. The cofactor is Cu cation. Zn(2+) is required as a cofactor.

It is found in the periplasm. It catalyses the reaction 2 superoxide + 2 H(+) = H2O2 + O2. Its function is as follows. Destroys radicals which are normally produced within the cells and which are toxic to biological systems. The chain is Superoxide dismutase [Cu-Zn] (sodC) from Pasteurella multocida (strain Pm70).